Here is a 238-residue protein sequence, read N- to C-terminus: MEHMFPEREIENLFVKWIKKHIRNGNLTLFEEFFKTDPWIVNRCDKNGSSVFMWICIYGRIDFLKFLFEQESYPGEIINPHRRDKDGNSALHYLAEKKNHLILEEVLGYFGKNGTKICLPNFNGMTPVMKAAIRGRTSNVLSLIKFGADPTQKDYHRGFTAWDWAVFTGNMELVKSLNHDYQKPLYMHFPLYKLDVFHRWFKKKPKIIITGCKNNVYEKLPEQNPNFLCVKKLNKYGK.

ANK repeat units lie at residues 48–77 (GSSVFMWICIYGRIDFLKFLFEQESYPGEI), 86–115 (DGNSALHYLAEKKNHLILEEVLGYFGKNGT), 123–152 (NGMTPVMKAAIRGRTSNVLSLIKFGADPTQ), and 157–187 (RGFTAWDWAVFTGNMELVKSLNHDYQKPLYM). A Nuclear localization signal motif is present at residues 80-86 (PHRRDKD). Positions 202–213 (KKKPKIIITGCK) match the Nuclear localization signal motif. The PxIxITxC motif; Interaction with host PPP3CA signature appears at 205-212 (PKIIITGC). An FLCV motif motif is present at residues 227–230 (FLCV).

Belongs to the asfivirus A238L family. Interacts with host PPIA. Interacts with host PPP3CA/Calcineurin. Interacts with host RELA/p65; interaction of the 32 kDa form with host RELA results in the formation of a stable complex with NF-kappa-B. Interacts with host PPP3R1. Interacts with host EP300; this interaction inhibits the association of host EP300 with host RELA, JUN and NFATC2. Post-translationally, the protein exists in a 28 kDa and a 32 kDa form, probably due to post-translational modifications which are neither phosphorylation, nor sumoylation.

It localises to the host nucleus. The protein resides in the host cytoplasm. I-kappa-B- (IkB)-like protein that inhibits the binding of NF-kappa-B to DNA, thereby down-regulating pro-inflammatory cytokine production. Forms a heterodimer with the NF-kappa-B subunit RELA/p65 and prevents the activation of the NF-kappa-B transcription factor. Also inhibits the host calcineurin phosphatase activity, which is required for the induction of nuclear factor of activated T cells(NFAT)-dependent immune response genes. Inhibits calcineurin function, which is required for the induction of nuclear factor of activated T cells (NFAT)-dependent immune response genes. Prevents the binding of substrates to calcineurin without affecting the phosphatase activity. Does not contain the serine residues that are phosphorylated by host IkB kinase and thus is not degraded following stimulation of the NFkB pathway. The chain is IkB-like protein (A238L) from African swine fever virus (strain Badajoz 1971 Vero-adapted) (Ba71V).